A 98-amino-acid chain; its full sequence is Small ribosomal subunit protein uS19 (98 aa).

The tract at residues 77–98 is disordered; sequence TRTYRGHAGGKAEKGGSAPKRK.

This sequence belongs to the universal ribosomal protein uS19 family.

In terms of biological role, protein S19 forms a complex with S13 that binds strongly to the 16S ribosomal RNA. The chain is Small ribosomal subunit protein uS19 from Prosthecochloris aestuarii (strain DSM 271 / SK 413).